A 339-amino-acid polypeptide reads, in one-letter code: UDP-N-acetylenolpyruvoylglucosamine reductase (339 aa).

Residues 16 to 188 (GIAATARYYS…LQVTLRLNKQ (173 aa)) form the FAD-binding PCMH-type domain. Arg164 is a catalytic residue. Ser238 (proton donor) is an active-site residue. The active site involves Glu334.

Belongs to the MurB family. The cofactor is FAD.

It localises to the cytoplasm. The enzyme catalyses UDP-N-acetyl-alpha-D-muramate + NADP(+) = UDP-N-acetyl-3-O-(1-carboxyvinyl)-alpha-D-glucosamine + NADPH + H(+). Its pathway is cell wall biogenesis; peptidoglycan biosynthesis. In terms of biological role, cell wall formation. This Amoebophilus asiaticus (strain 5a2) protein is UDP-N-acetylenolpyruvoylglucosamine reductase.